The primary structure comprises 900 residues: uncharacterized protein (900 aa).

The span at Met1–Arg16 shows a compositional bias: basic and acidic residues. Disordered regions lie at residues Met1–Ser84, Asn103–Ser160, Asn512–Gly556, Leu568–Asn613, and Lys648–Pro676. Over residues Gly17–Ser27 the composition is skewed to polar residues. The span at Lys30 to Arg58 shows a compositional bias: basic and acidic residues. 2 stretches are compositionally biased toward low complexity: residues Gln63–Ser76 and Asn103–Lys127. Residue Ser105 is modified to Phosphoserine. A compositionally biased stretch (basic residues) spans Gly129–Arg143. The segment covering Ser528–Ser537 has biased composition (low complexity). A compositionally biased stretch (basic residues) spans Lys543 to Lys553. 2 stretches are compositionally biased toward low complexity: residues Ser570 to Pro601 and Ser665 to Pro676.

This is an uncharacterized protein from Saccharomyces cerevisiae (strain ATCC 204508 / S288c) (Baker's yeast).